We begin with the raw amino-acid sequence, 406 residues long: Histidine--tRNA ligase (406 aa).

The protein belongs to the class-II aminoacyl-tRNA synthetase family. In terms of assembly, homodimer.

It is found in the cytoplasm. It catalyses the reaction tRNA(His) + L-histidine + ATP = L-histidyl-tRNA(His) + AMP + diphosphate + H(+). This chain is Histidine--tRNA ligase, found in Nitratiruptor sp. (strain SB155-2).